We begin with the raw amino-acid sequence, 811 residues long: Endothelin-converting enzyme 2 (811 aa).

Residues 1-106 (MNVALQELGA…QLLGSRTQLE (106 aa)) lie on the Cytoplasmic side of the membrane. The tract at residues 22–64 (LRDEDAPETPVEGGASPDAMEVGKGASPFSPGPSPGMTPGTPR) is disordered. The chain crosses the membrane as a helical; Signal-anchor for type II membrane protein span at residues 107 to 127 (LVLAGASLLLAALLLGCLVAL). The Lumenal segment spans residues 128-811 (GVQYHRDPSH…MNPGQLCEVW (684 aa)). The region spanning 139–811 (TCLTEACIRV…MNPGQLCEVW (673 aa)) is the Peptidase M13 domain. Disulfide bonds link Cys-140–Cys-145, Cys-163–Cys-796, Cys-171–Cys-756, Cys-227–Cys-476, and Cys-685–Cys-808. N-linked (GlcNAc...) asparagine glycans are attached at residues Asn-207, Asn-211, Asn-252, Asn-312, Asn-357, Asn-424, and Asn-580. His-648 provides a ligand contact to Zn(2+). Residue Glu-649 is part of the active site. Residue His-652 coordinates Zn(2+). 2 N-linked (GlcNAc...) asparagine glycosylation sites follow: Asn-673 and Asn-681. Glu-708 contacts Zn(2+). Residue Asp-712 is the Proton donor of the active site.

This sequence belongs to the peptidase M13 family. The cofactor is Zn(2+).

The protein resides in the golgi apparatus membrane. The protein localises to the cytoplasmic vesicle. It is found in the secretory vesicle membrane. The catalysed reaction is Hydrolysis of the 21-Trp-|-Val-22 bond in big endothelin to form endothelin 1.. Functionally, converts big endothelin-1 to endothelin-1. Also involved in the processing of various neuroendocrine peptides, including neurotensin, angiotensin I, substance P, proenkephalin-derived peptides, and prodynorphin-derived peptides. May play a role in amyloid-beta processing. This Homo sapiens (Human) protein is Endothelin-converting enzyme 2.